Here is a 1006-residue protein sequence, read N- to C-terminus: UPF0182 protein Arth_2749 (1006 aa).

7 consecutive transmembrane segments (helical) span residues 18–38 (GALT…IFFA), 64–84 (IIIF…AIRI), 115–135 (VVMI…AASQ), 168–188 (FLGF…IAGI), 211–231 (QIHL…NFWL), 260–280 (SILA…AVIG), and 287–307 (IGTA…PWVI). Disordered stretches follow at residues 490-519 (GAPE…FTGN), 896-923 (KAGD…GGTD), and 975-1006 (LGSE…SPSN). The span at 495 to 509 (SPHREQDRPAGKEGD) shows a compositional bias: basic and acidic residues. Low complexity-rich tracts occupy residues 911-923 (AGGS…GGTD) and 979-1000 (GASP…AATP).

This sequence belongs to the UPF0182 family.

The protein localises to the cell membrane. This Arthrobacter sp. (strain FB24) protein is UPF0182 protein Arth_2749.